Consider the following 1040-residue polypeptide: Beta-galactosidase (1040 aa).

The substrate site is built by Asn-111 and Asp-210. Asp-210 lines the Na(+) pocket. Residues Glu-427, His-429, and Glu-472 each coordinate Mg(2+). Substrate-binding positions include Glu-472 and 548–551 (EYAH). Glu-472 (proton donor) is an active-site residue. Catalysis depends on Glu-548, which acts as the Nucleophile. A Mg(2+)-binding site is contributed by Asn-608. Phe-612 and Asp-615 together coordinate Na(+). 2 residues coordinate substrate: Asp-615 and Trp-1016.

It belongs to the glycosyl hydrolase 2 family. Homotetramer. Mg(2+) is required as a cofactor. It depends on Na(+) as a cofactor.

It carries out the reaction Hydrolysis of terminal non-reducing beta-D-galactose residues in beta-D-galactosides.. The chain is Beta-galactosidase from Pectobacterium atrosepticum (strain SCRI 1043 / ATCC BAA-672) (Erwinia carotovora subsp. atroseptica).